The chain runs to 781 residues: Cadherin-24 (781 aa).

The N-terminal stretch at 1–22 (MWGLVRLLLAWLGGWGCMGRLA) is a signal peptide. The propeptide occupies 23–44 (APVPAWAGSRGHSGPTLLRTRR). The Extracellular portion of the chain corresponds to 45 to 603 (SWVWNQFFVI…LSPTGLSTGA (559 aa)). Cadherin domains are found at residues 46 to 150 (WVWN…PPVF), 151 to 259 (PLGP…PPKF), 260 to 374 (PQSL…PPAF), 375 to 479 (TQAT…APQL), and 479 to 592 (LAEP…WPEA). N-linked (GlcNAc...) asparagine glycans are attached at residues N446, N510, and N525. Residues 604–624 (LLAIVTCMGTLLALVVLFVAL) traverse the membrane as a helical segment. The Cytoplasmic portion of the chain corresponds to 625-781 (RRQKQEALMV…LYGAKEPPAP (157 aa)). Disordered regions lie at residues 665 to 700 (LQNP…PGPA) and 731 to 762 (EGRG…LDDW). The span at 733–746 (RGSSCGSLSSLGSG) shows a compositional bias: low complexity.

In terms of assembly, associates with alpha-, beta- and delta-catenins.

The protein resides in the cell membrane. Its function is as follows. Cadherins are calcium-dependent cell adhesion proteins. They preferentially interact with themselves in a homophilic manner in connecting cells; cadherins may thus contribute to the sorting of heterogeneous cell types. Cadherin-24 mediate strong cell-cell adhesion. The sequence is that of Cadherin-24 (Cdh24) from Mus musculus (Mouse).